We begin with the raw amino-acid sequence, 230 residues long: uncharacterized protein (230 aa).

Over residues 1–11 the composition is skewed to polar residues; sequence MPVPSVTVTTD. Positions 1-88 are disordered; it reads MPVPSVTVTT…TLKRPTSNSI (88 aa). A compositionally biased stretch (basic and acidic residues) spans 63 to 73; that stretch reads DDQHRHSDVHS. The segment covering 79–88 has biased composition (polar residues); sequence TLKRPTSNSI. Serine 106 is modified (phosphoserine). Over residues 156 to 179 the composition is skewed to basic and acidic residues; sequence LKREDSRVSSTKKEHINDHTDMHS. The tract at residues 156-203 is disordered; that stretch reads LKREDSRVSSTKKEHINDHTDMHSTRSKVTTNSQGSSLEPNKLNMAVE. Positions 182–194 are enriched in polar residues; it reads SKVTTNSQGSSLE.

This is an uncharacterized protein from Saccharomyces cerevisiae (strain ATCC 204508 / S288c) (Baker's yeast).